The chain runs to 317 residues: Pantothenate kinase (317 aa).

ATP is bound at residue Gly-95–Ser-102.

This sequence belongs to the prokaryotic pantothenate kinase family.

The protein resides in the cytoplasm. The enzyme catalyses (R)-pantothenate + ATP = (R)-4'-phosphopantothenate + ADP + H(+). It functions in the pathway cofactor biosynthesis; coenzyme A biosynthesis; CoA from (R)-pantothenate: step 1/5. In Rhodopseudomonas palustris (strain BisB18), this protein is Pantothenate kinase.